The chain runs to 259 residues: DNA-directed RNA polymerase 30 kDa polypeptide (259 aa).

The TFIIS-type zinc-finger motif lies at 155–195 (YNTPCPNCKSRNTTPMMIQTRAADEPPLVRHACRDCKQHFK). Residues Cys159, Cys162, Cys187, and Cys190 each coordinate Zn(2+). The disordered stretch occupies residues 220 to 259 (EILPDNNPSPPESPEPASPIDDGLIRATFDRNDEPPEDDE). Over residues 226–236 (NPSPPESPEPA) the composition is skewed to pro residues.

It belongs to the poxviridae DNA-directed RNA polymerase 30 kDa subunit family. The DNA-dependent RNA polymerase (vRNAP) consists of eight subunits encoded by early viral genes and termed according to their apparent molecular masses Rpo147, Rpo132, Rpo35, Rpo30, Rpo22, Rpo19, Rpo18, and Rpo7. The same holoenzyme, with the addition of the transcription-specificity factor RAP94, is used for early gene expression.

Its subcellular location is the virion. The protein localises to the host cytoplasm. The enzyme catalyses RNA(n) + a ribonucleoside 5'-triphosphate = RNA(n+1) + diphosphate. Functionally, part of the DNA-dependent RNA polymerase which catalyzes the transcription of viral DNA into RNA using the four ribonucleoside triphosphates as substrates. Responsible for the transcription of early, intermediate and late genes. DNA-dependent RNA polymerase associates with the early transcription factor (ETF), itself composed of OPG118 and OPG134, thereby allowing the early genes transcription. Late transcription, and probably also intermediate transcription, require newly synthesized RNA polymerase. The chain is DNA-directed RNA polymerase 30 kDa polypeptide (OPG066) from Monkeypox virus.